The primary structure comprises 422 residues: G2/mitotic-specific cyclin-A (422 aa).

The segment at 1-29 is disordered; it reads MSQPFALHHDGENQMQRRGKMNTRSNGLS.

The protein belongs to the cyclin family. Cyclin AB subfamily.

Essential for the control of the cell cycle at the G2/M (mitosis) transition. Interacts with the CDC2 and CDK2 protein kinases to form MPF. G2/M cyclins accumulate steadily during G2 and are abruptly destroyed at mitosis. This Spisula solidissima (Atlantic surf-clam) protein is G2/mitotic-specific cyclin-A.